The chain runs to 488 residues: Prostaglandin E2 receptor EP4 subtype (488 aa).

Residues 1-19 lie on the Extracellular side of the membrane; sequence MSIPGVNASFSSTPERLNS. N-linked (GlcNAc...) asparagine glycosylation is present at N7. Residues 20–43 form a helical membrane-spanning segment; sequence PVTIPAVMFIFGVVGNLVAIVVLC. Over 44-55 the chain is Cytoplasmic; that stretch reads KSRKEQKETTFY. Residues 56 to 79 form a helical membrane-spanning segment; the sequence is TLVCGLAVTDLLGTLLVSPVTIAT. The Extracellular segment spans residues 80–96; that stretch reads YMKGQWPGDQALCDYST. The cysteines at positions 92 and 170 are disulfide-linked. The helical transmembrane segment at 97-115 threads the bilayer; that stretch reads FILLFFGLSGLSIICAMSI. The Cytoplasmic segment spans residues 116 to 135; that stretch reads ERYLAINHAYFYSHYVDKRL. The helical transmembrane segment at 136 to 160 threads the bilayer; the sequence is AGLTLFAVYASNVLFCALPNMGLGR. Topologically, residues 161–184 are extracellular; sequence SERQYPGTWCFIDWTTNVTAYAAF. The chain crosses the membrane as a helical span at residues 185–211; that stretch reads SYMYAGFSSFLILATVLCNVLVCGALL. Residues 212–270 are Cytoplasmic-facing; the sequence is RMLRQFMRRTSLGTEQHHAAAAAAVASVACRGHAAASPALQRLSDFRRRRSFRRIAGAE. Residues 271–298 traverse the membrane as a helical segment; the sequence is IQMVILLIATSLVVLICSIPLVVRVFIN. Residues 299–315 are Extracellular-facing; that stretch reads QLYQPSVVKDISRNPDL. Residues 316–335 traverse the membrane as a helical segment; that stretch reads QAIRIASVNPILDPWIYILL. The Cytoplasmic segment spans residues 336-488; the sequence is RKTVLSKAIE…ETLKLSEKCI (153 aa). Residues 358–380 form a disordered region; the sequence is GRDGSAQHCSESRRTSSAMSGHS. S377, S380, S382, and S385 each carry phosphoserine.

It belongs to the G-protein coupled receptor 1 family. As to quaternary structure, interacts with FEM1A. Post-translationally, phosphorylation mediates agonist-mediated desensitization by promoting cytoplasmic retention.

The protein localises to the cell membrane. Functionally, receptor for prostaglandin E2 (PGE2). The activity of this receptor is mediated by G(s) proteins that stimulate adenylate cyclase. Has a relaxing effect on smooth muscle. May play an important role in regulating renal hemodynamics, intestinal epithelial transport, adrenal aldosterone secretion, and uterine function. This is Prostaglandin E2 receptor EP4 subtype (Ptger4) from Rattus norvegicus (Rat).